The chain runs to 104 residues: NADH-quinone oxidoreductase subunit K (104 aa).

The next 3 helical transmembrane spans lie at 4 to 24, 31 to 51, and 67 to 87; these read VPAS…LFGA, VIVL…LVAF, and LFTM…LIAL.

The protein belongs to the complex I subunit 4L family. As to quaternary structure, NDH-1 is composed of 14 different subunits. Subunits NuoA, H, J, K, L, M, N constitute the membrane sector of the complex.

It is found in the cell membrane. It carries out the reaction a quinone + NADH + 5 H(+)(in) = a quinol + NAD(+) + 4 H(+)(out). NDH-1 shuttles electrons from NADH, via FMN and iron-sulfur (Fe-S) centers, to quinones in the respiratory chain. The immediate electron acceptor for the enzyme in this species is believed to be a menaquinone. Couples the redox reaction to proton translocation (for every two electrons transferred, four hydrogen ions are translocated across the cytoplasmic membrane), and thus conserves the redox energy in a proton gradient. In Bacillus cereus (strain AH187), this protein is NADH-quinone oxidoreductase subunit K.